Reading from the N-terminus, the 1427-residue chain is DNA-directed RNA polymerase subunit beta' (1427 aa).

Zn(2+)-binding residues include C70, C72, C85, and C88. The Mg(2+) site is built by D461, D463, and D465. Residues C838, C912, C919, and C922 each contribute to the Zn(2+) site.

The protein belongs to the RNA polymerase beta' chain family. As to quaternary structure, the RNAP catalytic core consists of 2 alpha, 1 beta, 1 beta' and 1 omega subunit. When a sigma factor is associated with the core the holoenzyme is formed, which can initiate transcription. Mg(2+) serves as cofactor. It depends on Zn(2+) as a cofactor.

It catalyses the reaction RNA(n) + a ribonucleoside 5'-triphosphate = RNA(n+1) + diphosphate. Functionally, DNA-dependent RNA polymerase catalyzes the transcription of DNA into RNA using the four ribonucleoside triphosphates as substrates. The sequence is that of DNA-directed RNA polymerase subunit beta' from Sorangium cellulosum (strain So ce56) (Polyangium cellulosum (strain So ce56)).